We begin with the raw amino-acid sequence, 269 residues long: 3-deoxy-manno-octulosonate cytidylyltransferase (269 aa).

It belongs to the KdsB family.

It localises to the cytoplasm. It catalyses the reaction 3-deoxy-alpha-D-manno-oct-2-ulosonate + CTP = CMP-3-deoxy-beta-D-manno-octulosonate + diphosphate. Its pathway is nucleotide-sugar biosynthesis; CMP-3-deoxy-D-manno-octulosonate biosynthesis; CMP-3-deoxy-D-manno-octulosonate from 3-deoxy-D-manno-octulosonate and CTP: step 1/1. It functions in the pathway bacterial outer membrane biogenesis; lipopolysaccharide biosynthesis. Its function is as follows. Activates KDO (a required 8-carbon sugar) for incorporation into bacterial lipopolysaccharide in Gram-negative bacteria. The sequence is that of 3-deoxy-manno-octulosonate cytidylyltransferase from Cupriavidus necator (strain ATCC 17699 / DSM 428 / KCTC 22496 / NCIMB 10442 / H16 / Stanier 337) (Ralstonia eutropha).